A 441-amino-acid chain; its full sequence is Probable cyclic di-GMP phosphodiesterase VC_1348 (441 aa).

In terms of domain architecture, Response regulatory spans 72–187; the sequence is TILIVDDSPD…LLKSRVHTHL (116 aa). D120 is subject to 4-aspartylphosphate. An HD-GYP domain is found at 214 to 425; sequence LDRMQDAVVF…FIDIAQKFAD (212 aa).

The catalysed reaction is 3',3'-c-di-GMP + 2 H2O = 2 GMP + 2 H(+). Probable phosphodiesterase (PDE) that catalyzes the hydrolysis of cyclic diguanylate (c-di-GMP). Increases motility and decreases biofilm formation in vivo. The sequence is that of Probable cyclic di-GMP phosphodiesterase VC_1348 from Vibrio cholerae serotype O1 (strain ATCC 39315 / El Tor Inaba N16961).